Here is a 170-residue protein sequence, read N- to C-terminus: Inosine/xanthosine triphosphatase (170 aa).

It belongs to the YjjX NTPase family. As to quaternary structure, homodimer. Mg(2+) serves as cofactor. Mn(2+) is required as a cofactor.

It catalyses the reaction XTP + H2O = XDP + phosphate + H(+). The catalysed reaction is ITP + H2O = IDP + phosphate + H(+). Its function is as follows. Phosphatase that hydrolyzes non-canonical purine nucleotides such as XTP and ITP to their respective diphosphate derivatives. Probably excludes non-canonical purines from DNA/RNA precursor pool, thus preventing their incorporation into DNA/RNA and avoiding chromosomal lesions. The chain is Inosine/xanthosine triphosphatase from Aliivibrio fischeri (strain MJ11) (Vibrio fischeri).